Reading from the N-terminus, the 357-residue chain is 3-isopropylmalate dehydrogenase (357 aa).

The substrate site is built by arginine 97, arginine 107, arginine 135, and aspartate 224. 3 residues coordinate Mg(2+): aspartate 224, aspartate 248, and aspartate 252. Glycine 282–asparagine 294 lines the NAD(+) pocket.

It belongs to the isocitrate and isopropylmalate dehydrogenases family. LeuB type 1 subfamily. In terms of assembly, homodimer. Requires Mg(2+) as cofactor. The cofactor is Mn(2+).

The protein resides in the cytoplasm. It carries out the reaction (2R,3S)-3-isopropylmalate + NAD(+) = 4-methyl-2-oxopentanoate + CO2 + NADH. Its pathway is amino-acid biosynthesis; L-leucine biosynthesis; L-leucine from 3-methyl-2-oxobutanoate: step 3/4. Functionally, catalyzes the oxidation of 3-carboxy-2-hydroxy-4-methylpentanoate (3-isopropylmalate) to 3-carboxy-4-methyl-2-oxopentanoate. The product decarboxylates to 4-methyl-2 oxopentanoate. The chain is 3-isopropylmalate dehydrogenase from Synechococcus sp. (strain CC9902).